Reading from the N-terminus, the 318-residue chain is Porphobilinogen deaminase (318 aa).

Residue Cys-245 is modified to S-(dipyrrolylmethanemethyl)cysteine.

This sequence belongs to the HMBS family. Monomer. Dipyrromethane is required as a cofactor.

It catalyses the reaction 4 porphobilinogen + H2O = hydroxymethylbilane + 4 NH4(+). It functions in the pathway porphyrin-containing compound metabolism; protoporphyrin-IX biosynthesis; coproporphyrinogen-III from 5-aminolevulinate: step 2/4. The protein operates within porphyrin-containing compound metabolism; chlorophyll biosynthesis. Functionally, tetrapolymerization of the monopyrrole PBG into the hydroxymethylbilane pre-uroporphyrinogen in several discrete steps. The protein is Porphobilinogen deaminase of Prochlorococcus marinus (strain MIT 9215).